We begin with the raw amino-acid sequence, 1447 residues long: DNA topoisomerase 2 (1447 aa).

ATP is bound by residues N72, N101, 129-131, and 142-149; these read SSN and GRNGYGAK. The interval 323-325 is interaction with DNA; the sequence is KKK. 357-359 contributes to the ATP binding site; that stretch reads QTK. The Toprim domain maps to 435 to 552; sequence CTLILTEGDS…ELLRLPFLEE (118 aa). Mg(2+)-binding residues include E441, D521, and D523. The Topo IIA-type catalytic domain occupies 695-1169; sequence IPSLVDGLKP…TPEMLWLDDL (475 aa). Y785 (O-(5'-phospho-DNA)-tyrosine intermediate) is an active-site residue. Residues 972 to 981 form an interaction with DNA region; it reads KLTTTLSTNQ. Disordered stretches follow at residues 1079 to 1110, 1183 to 1231, and 1246 to 1447; these read EDAEQADEEDEEEEEAAPSVSSKAKKEKEVDP, ERAE…DGEP, and AAAK…DFNC. The span at 1081 to 1094 shows a compositional bias: acidic residues; the sequence is AEQADEEDEEEEEA. Basic and acidic residues predominate over residues 1255–1281; it reads KEPKKPKEPKEPKVKKEPKGKQIKAEP. The segment covering 1283–1293 has biased composition (acidic residues); the sequence is ASGDEVDEFDA. S1284 is modified (phosphoserine). 2 stretches are compositionally biased toward basic and acidic residues: residues 1310 to 1325 and 1332 to 1359; these read VKKEPGEKKPRQKKEN and SKIDFSKAKAKKSDDDVEEVTPRAERPG. S1344 carries the post-translational modification Phosphoserine. Phosphothreonine is present on T1352. Phosphoserine is present on residues S1374, S1385, S1392, and S1396. The span at 1374 to 1394 shows a compositional bias: acidic residues; sequence SDEEEDGGNVGSDDDGNASDD. The span at 1395–1408 shows a compositional bias: basic and acidic residues; sequence DSPKRPAKRGREDE. Residues 1413–1423 show a composition bias toward basic residues; sequence AKKKAPPKKRR. Positions 1427-1447 are enriched in acidic residues; that stretch reads ESDDDDIEIDEDDDDDSDFNC.

Belongs to the type II topoisomerase family. As to quaternary structure, homodimer. Interacts with mod(mdg4). Interacts with barr. Interacts with ph-p. Interacts with mle; the interaction mediates association with the MSL dosage compensation complex. The cofactor is Mg(2+). Mn(2+) serves as cofactor. Requires Ca(2+) as cofactor. Post-translationally, phosphorylated. Phosphorylation by casein kinase II enhances ATPase activity.

It is found in the nucleus. The protein localises to the chromosome. It localises to the cytoplasm. It catalyses the reaction ATP-dependent breakage, passage and rejoining of double-stranded DNA.. Control of topological states of DNA by transient breakage and subsequent rejoining of DNA strands. Topoisomerase II makes double-strand breaks. Essential during mitosis and meiosis for proper segregation of daughter chromosomes. During meiosis, it disrupts heterochromatic connections between achiasmate and chiasmate homologs after spindle assembly so that chromosomes can separate at prometaphase I. During mitosis, it functions in the separation of sister chromatids by establishing amphitelic kinetochore attachments in mitotic spindles. May have a role in chromatin condensation and chromosome structure. May be involved in X-chromosome dosage compensation, perhaps by modifying the topological state of compensated genes. Regulates activity of the gypsy chromatin insulator complex by binding to mod(mdg4) and preventing its degradation. The chain is DNA topoisomerase 2 from Drosophila melanogaster (Fruit fly).